The chain runs to 1226 residues: Methionine synthase (1226 aa).

Residues lysine 7 to valine 327 form the Hcy-binding domain. Residues cysteine 249, cysteine 312, and cysteine 313 each contribute to the Zn(2+) site. Residues phenylalanine 358–glutamate 619 enclose the Pterin-binding domain. The 95-residue stretch at serine 652–alanine 746 folds into the B12-binding N-terminal domain. Residues glutamate 696, glycine 758–aspartate 762, histidine 761, serine 806, threonine 810, and alanine 862 contribute to the methylcob(III)alamin site. A B12-binding domain is found at asparagine 748 to glutamate 883. One can recognise an AdoMet activation domain in the interval lysine 899–asparagine 1226. Residues aspartate 949, arginine 1137, and tyrosine 1192–phenylalanine 1193 each bind S-adenosyl-L-methionine.

The protein belongs to the vitamin-B12 dependent methionine synthase family. It depends on methylcob(III)alamin as a cofactor. Zn(2+) serves as cofactor.

It carries out the reaction (6S)-5-methyl-5,6,7,8-tetrahydrofolate + L-homocysteine = (6S)-5,6,7,8-tetrahydrofolate + L-methionine. It participates in amino-acid biosynthesis; L-methionine biosynthesis via de novo pathway; L-methionine from L-homocysteine (MetH route): step 1/1. In terms of biological role, catalyzes the transfer of a methyl group from methyl-cobalamin to homocysteine, yielding enzyme-bound cob(I)alamin and methionine. Subsequently, remethylates the cofactor using methyltetrahydrofolate. In Aliivibrio fischeri (strain ATCC 700601 / ES114) (Vibrio fischeri), this protein is Methionine synthase (metH).